Reading from the N-terminus, the 608-residue chain is Aspartate--tRNA(Asp/Asn) ligase (608 aa).

L-aspartate is bound at residue Glu-187. Positions 211 to 214 (QQFK) are aspartate. Residues Arg-233 and His-461 each contribute to the L-aspartate site. 233–235 (RDE) contributes to the ATP binding site. Glu-495 contributes to the ATP binding site. Arg-502 contributes to the L-aspartate binding site. 547 to 550 (GLDR) is a binding site for ATP.

Belongs to the class-II aminoacyl-tRNA synthetase family. Type 1 subfamily. Homodimer.

Its subcellular location is the cytoplasm. It carries out the reaction tRNA(Asx) + L-aspartate + ATP = L-aspartyl-tRNA(Asx) + AMP + diphosphate. Aspartyl-tRNA synthetase with relaxed tRNA specificity since it is able to aspartylate not only its cognate tRNA(Asp) but also tRNA(Asn). Reaction proceeds in two steps: L-aspartate is first activated by ATP to form Asp-AMP and then transferred to the acceptor end of tRNA(Asp/Asn). In Chlorobium phaeobacteroides (strain BS1), this protein is Aspartate--tRNA(Asp/Asn) ligase.